The sequence spans 35 residues: Photosystem II reaction center protein T (35 aa).

Residues 3-23 (ALVYTFLLIGTLGIIFFAIFF) traverse the membrane as a helical segment.

It belongs to the PsbT family. PSII is composed of 1 copy each of membrane proteins PsbA, PsbB, PsbC, PsbD, PsbE, PsbF, PsbH, PsbI, PsbJ, PsbK, PsbL, PsbM, PsbT, PsbY, PsbZ, Psb30/Ycf12, at least 3 peripheral proteins of the oxygen-evolving complex and a large number of cofactors. It forms dimeric complexes.

It is found in the plastid. Its subcellular location is the chloroplast thylakoid membrane. Its function is as follows. Found at the monomer-monomer interface of the photosystem II (PS II) dimer, plays a role in assembly and dimerization of PSII. PSII is a light-driven water plastoquinone oxidoreductase, using light energy to abstract electrons from H(2)O, generating a proton gradient subsequently used for ATP formation. The chain is Photosystem II reaction center protein T from Coleochaete orbicularis (Charophycean green alga).